The following is a 187-amino-acid chain: Elongation factor P (187 aa).

Belongs to the elongation factor P family.

The protein localises to the cytoplasm. It functions in the pathway protein biosynthesis; polypeptide chain elongation. Involved in peptide bond synthesis. Stimulates efficient translation and peptide-bond synthesis on native or reconstituted 70S ribosomes in vitro. Probably functions indirectly by altering the affinity of the ribosome for aminoacyl-tRNA, thus increasing their reactivity as acceptors for peptidyl transferase. This chain is Elongation factor P, found in Granulibacter bethesdensis (strain ATCC BAA-1260 / CGDNIH1).